A 479-amino-acid chain; its full sequence is Phosphatidylinositol 4-kinase type 2-alpha (479 aa).

Met1 carries the N-acetylmethionine modification. The disordered stretch occupies residues 1–74; the sequence is MDETSPLVSP…ARGAAAQGQT (74 aa). A phosphoserine mark is found at Ser5, Ser9, Ser44, Ser47, and Ser51. Low complexity predominate over residues 31 to 45; it reads VPGGAVRVAAAAGSG. Basic and acidic residues predominate over residues 53–66; that stretch reads GHDRERQPLLDRAR. Residues 124–453 form the PI3K/PI4K catalytic domain; it reads CIFPERIYQG…VQMPPVIVET (330 aa). The interval 130-136 is G-loop; that stretch reads IYQGSSG. Residues 131–137 and Lys152 contribute to the ATP site; that span reads YQGSSGS. The tract at residues 157 to 159 is important for substrate binding; that stretch reads EPY. Residues 165–178 form an important for interaction with membranes region; sequence KWTKWLQKLCCPCC. 4 S-palmitoyl cysteine lipidation sites follow: Cys174, Cys175, Cys177, and Cys178. 261 to 264 lines the ATP pocket; that stretch reads QLFV. Positions 268–276 are important for interaction with membranes; it reads KDADYWLRR. Positions 305-313 are catalytic loop; that stretch reads RNTDRGNDN. The activation loop stretch occupies residues 344-364; it reads AIDNGLAFPLKHPDSWRAYPF. Residue Asp346 coordinates ATP. Residues 359-368 are important for interaction with membranes; sequence WRAYPFYWAW. Ser462 is subject to Phosphoserine.

It belongs to the PI3/PI4-kinase family. Type II PI4K subfamily. As to quaternary structure, associates with the BLOC-1 and the AP-3 complexes; the BLOC-1 complex is required for optimal binding of PI4K2A to the AP-3 complex. Interacts with BLOC1S5 and DTNBP1. Interacts with FOS; this interaction may enhance phosphatidylinositol phosphorylation activity. Interacts with ITCH. Interacts with ATG9A. In terms of processing, palmitoylated by ZDHHC3 and ZDHHC7 in the CCPCC motif. Palmitoylation is cholesterol-dependent, and required for TGN localization. Ubiquitinated by ITCH; this does not lead to proteasomal degradation. Widely expressed. Highest expression is observed in kidney, brain, heart, skeletal muscle, and placenta and lowest expression is observed in colon, thymus, and small intestine.

Its subcellular location is the golgi apparatus. It localises to the trans-Golgi network membrane. The protein resides in the membrane raft. The protein localises to the cell projection. It is found in the dendrite. Its subcellular location is the presynaptic cell membrane. It localises to the synapse. The protein resides in the synaptosome. The protein localises to the mitochondrion. It is found in the endosome. Its subcellular location is the endosome membrane. It localises to the cytoplasmic vesicle. The protein resides in the membrane. The protein localises to the cell membrane. It is found in the perikaryon. Its subcellular location is the neuron projection. The catalysed reaction is a 1,2-diacyl-sn-glycero-3-phospho-(1D-myo-inositol) + ATP = a 1,2-diacyl-sn-glycero-3-phospho-(1D-myo-inositol 4-phosphate) + ADP + H(+). Its function is as follows. Membrane-bound phosphatidylinositol-4 kinase (PI4-kinase) that catalyzes the phosphorylation of phosphatidylinositol (PI) to phosphatidylinositol 4-phosphate (PI4P), a lipid that plays important roles in endocytosis, Golgi function, protein sorting and membrane trafficking and is required for prolonged survival of neurons. Besides, phosphorylation of phosphatidylinositol (PI) to phosphatidylinositol 4-phosphate (PI4P) is the first committed step in the generation of phosphatidylinositol 4,5-bisphosphate (PIP2), a precursor of the second messenger inositol 1,4,5-trisphosphate (InsP3). The protein is Phosphatidylinositol 4-kinase type 2-alpha (PI4K2A) of Homo sapiens (Human).